We begin with the raw amino-acid sequence, 186 residues long: Prorelaxin 1 (186 aa).

The first 22 residues, 1-22, serve as a signal peptide directing secretion; sequence MSSRLLLQLLGFWLFLSQPCRA. Cystine bridges form between cysteine 36-cysteine 173, cysteine 48-cysteine 186, and cysteine 172-cysteine 177. Positions 58-158 are cleaved as a propeptide — connecting peptide; it reads SQEEPAPLAR…LKYLGSDAQS (101 aa). Glutamine 163 carries the post-translational modification Pyrrolidone carboxylic acid.

It belongs to the insulin family. In terms of assembly, heterodimer of a B chain and an A chain linked by two disulfide bonds.

The protein resides in the secreted. Its function is as follows. Relaxin is an ovarian hormone that acts with estrogen to produce dilatation of the birth canal in many mammals. The sequence is that of Prorelaxin 1 (Rln1) from Rattus norvegicus (Rat).